The following is a 460-amino-acid chain: Cysteine--tRNA ligase (460 aa).

Cys28 lines the Zn(2+) pocket. Positions 30 to 40 (MTVYDYCHLGH) match the 'HIGH' region motif. The Zn(2+) site is built by Cys209, His234, and Glu238. The 'KMSKS' region motif lies at 266-270 (KMSKS). Lys269 contributes to the ATP binding site.

This sequence belongs to the class-I aminoacyl-tRNA synthetase family. Monomer. It depends on Zn(2+) as a cofactor.

The protein resides in the cytoplasm. The catalysed reaction is tRNA(Cys) + L-cysteine + ATP = L-cysteinyl-tRNA(Cys) + AMP + diphosphate. This is Cysteine--tRNA ligase from Pseudomonas putida (strain ATCC 700007 / DSM 6899 / JCM 31910 / BCRC 17059 / LMG 24140 / F1).